Here is a 469-residue protein sequence, read N- to C-terminus: ATP synthase subunit beta (469 aa).

Residue 156–163 (GGAGVGKT) participates in ATP binding.

It belongs to the ATPase alpha/beta chains family. In terms of assembly, F-type ATPases have 2 components, CF(1) - the catalytic core - and CF(0) - the membrane proton channel. CF(1) has five subunits: alpha(3), beta(3), gamma(1), delta(1), epsilon(1). CF(0) has three main subunits: a(1), b(2) and c(9-12). The alpha and beta chains form an alternating ring which encloses part of the gamma chain. CF(1) is attached to CF(0) by a central stalk formed by the gamma and epsilon chains, while a peripheral stalk is formed by the delta and b chains.

It is found in the cell membrane. It catalyses the reaction ATP + H2O + 4 H(+)(in) = ADP + phosphate + 5 H(+)(out). In terms of biological role, produces ATP from ADP in the presence of a proton gradient across the membrane. The catalytic sites are hosted primarily by the beta subunits. In Lactococcus lactis subsp. cremoris (strain MG1363), this protein is ATP synthase subunit beta.